Here is a 1216-residue protein sequence, read N- to C-terminus: Apical endosomal glycoprotein (1216 aa).

Residues 1 to 21 (MCLPSCLLSIWVLFMAAQSLG) form the signal peptide. At 22-1155 (KTWVPDHCRS…SQGRVAAPVS (1134 aa)) the chain is on the extracellular side. An LDL-receptor class A 1; truncated domain is found at 27–54 (DHCRSPTEATCNFVCDCGDCSDEAQCGF). Residues 62-224 (NTPFTCNFEQ…DDMEFWDCGL (163 aa)) enclose the MAM 1 domain. An N-linked (GlcNAc...) asparagine glycan is attached at Asn-205. Residues 229 to 269 (ARCPLGHHHCQNKACVEPHQLCDGEDNCGDSSDEDPLICSH) enclose the LDL-receptor class A 2 domain. Disulfide bonds link Cys-231/Cys-243, Cys-238/Cys-256, and Cys-250/Cys-267. The 160-residue stretch at 268-427 (SHHMATDFET…DLIMSNHCIL (160 aa)) folds into the MAM 2 domain. N-linked (GlcNAc...) asparagine glycosylation is found at Asn-291, Asn-341, and Asn-368. Residues 454 to 491 (RTCDAGHLSCDELCVPPEQLCDFQQHCAEGEDEEKCGT) form the LDL-receptor class A 3 domain. 3 disulfides stabilise this stretch: Cys-456/Cys-467, Cys-463/Cys-480, and Cys-474/Cys-489. MAM domains are found at residues 492–647 (TDFE…DCNP), 654–813 (DQEV…PCWA), 812–973 (WAAK…PCAQ), and 972–1142 (AQPG…HCKQ). Asn-639 carries an N-linked (GlcNAc...) asparagine glycan. Asn-839 carries N-linked (GlcNAc...) asparagine glycosylation. The chain crosses the membrane as a helical span at residues 1156 to 1176 (VPVAVGGALLLFLLLLGLGGW). The Cytoplasmic segment spans residues 1177 to 1216 (HWLQKQHLPCQSTDAAASGFDNILFNADQVTLPESITSNP).

In terms of tissue distribution, apical endosomal tubules of developing rat intestinal epithelial cells.

It is found in the membrane. Functionally, probably involved in the sorting and selective transport of receptors and ligands across polarized epithelia. The protein is Apical endosomal glycoprotein (Mamdc4) of Rattus norvegicus (Rat).